The following is a 747-amino-acid chain: uncharacterized protein (747 aa).

Residues 7-27 (FFLKVISVIAPIVIIPTILAN) form a helical membrane-spanning segment.

Its subcellular location is the membrane. This is an uncharacterized protein from Ureaplasma parvum serovar 3 (strain ATCC 700970).